The primary structure comprises 84 residues: Small ribosomal subunit protein bS20 (84 aa).

Residues 1-25 are disordered; sequence MANIVSNEKTYRHTQKVRKENHAKM.

It belongs to the bacterial ribosomal protein bS20 family.

Functionally, binds directly to 16S ribosomal RNA. The chain is Small ribosomal subunit protein bS20 from Ureaplasma parvum serovar 3 (strain ATCC 700970).